Reading from the N-terminus, the 306-residue chain is Ornithine carbamoyltransferase (306 aa).

Residues 53 to 56 (STRT), Q80, R104, and 131 to 134 (HPCQ) contribute to the carbamoyl phosphate site. L-ornithine is bound by residues N162, D219, and 223-224 (SM). Residues 259-260 (CL) and R287 each bind carbamoyl phosphate.

This sequence belongs to the aspartate/ornithine carbamoyltransferase superfamily. OTCase family.

It localises to the cytoplasm. The enzyme catalyses carbamoyl phosphate + L-ornithine = L-citrulline + phosphate + H(+). The protein operates within amino-acid biosynthesis; L-arginine biosynthesis; L-arginine from L-ornithine and carbamoyl phosphate: step 1/3. Reversibly catalyzes the transfer of the carbamoyl group from carbamoyl phosphate (CP) to the N(epsilon) atom of ornithine (ORN) to produce L-citrulline. The sequence is that of Ornithine carbamoyltransferase from Acinetobacter baumannii (strain ATCC 17978 / DSM 105126 / CIP 53.77 / LMG 1025 / NCDC KC755 / 5377).